Reading from the N-terminus, the 472-residue chain is UDP-N-acetylmuramate--L-alanine ligase (472 aa).

Residue 119-125 participates in ATP binding; that stretch reads GTHGKTT.

The protein belongs to the MurCDEF family.

The protein resides in the cytoplasm. It carries out the reaction UDP-N-acetyl-alpha-D-muramate + L-alanine + ATP = UDP-N-acetyl-alpha-D-muramoyl-L-alanine + ADP + phosphate + H(+). It functions in the pathway cell wall biogenesis; peptidoglycan biosynthesis. Cell wall formation. This chain is UDP-N-acetylmuramate--L-alanine ligase, found in Caulobacter sp. (strain K31).